Reading from the N-terminus, the 345-residue chain is Phenylalanine--tRNA ligase alpha subunit (345 aa).

E253 is a binding site for Mg(2+).

The protein belongs to the class-II aminoacyl-tRNA synthetase family. Phe-tRNA synthetase alpha subunit type 1 subfamily. In terms of assembly, tetramer of two alpha and two beta subunits. Mg(2+) is required as a cofactor.

The protein localises to the cytoplasm. It catalyses the reaction tRNA(Phe) + L-phenylalanine + ATP = L-phenylalanyl-tRNA(Phe) + AMP + diphosphate + H(+). This Nitratidesulfovibrio vulgaris (strain DSM 19637 / Miyazaki F) (Desulfovibrio vulgaris) protein is Phenylalanine--tRNA ligase alpha subunit.